Reading from the N-terminus, the 159-residue chain is Phosphopantetheine adenylyltransferase (159 aa).

Thr9 is a substrate binding site. ATP-binding positions include 9 to 10 and His17; that span reads TF. Positions 41, 73, and 87 each coordinate substrate. ATP contacts are provided by residues 88–90, Glu98, and 123–129; these read GLR and YSFISST.

The protein belongs to the bacterial CoaD family. As to quaternary structure, homohexamer. The cofactor is Mg(2+).

The protein resides in the cytoplasm. The enzyme catalyses (R)-4'-phosphopantetheine + ATP + H(+) = 3'-dephospho-CoA + diphosphate. It functions in the pathway cofactor biosynthesis; coenzyme A biosynthesis; CoA from (R)-pantothenate: step 4/5. Its function is as follows. Reversibly transfers an adenylyl group from ATP to 4'-phosphopantetheine, yielding dephospho-CoA (dPCoA) and pyrophosphate. The polypeptide is Phosphopantetheine adenylyltransferase (Pseudomonas syringae pv. syringae (strain B728a)).